Reading from the N-terminus, the 424-residue chain is Histidinol dehydrogenase (424 aa).

NAD(+)-binding residues include Tyr-121, Gln-183, and Asn-206. Substrate is bound by residues Ser-229, Gln-251, and His-254. 2 residues coordinate Zn(2+): Gln-251 and His-254. Active-site proton acceptor residues include Glu-319 and His-320. 4 residues coordinate substrate: His-320, Asp-353, Glu-407, and His-412. Asp-353 contacts Zn(2+). Residue His-412 participates in Zn(2+) binding.

It belongs to the histidinol dehydrogenase family. Zn(2+) is required as a cofactor.

The catalysed reaction is L-histidinol + 2 NAD(+) + H2O = L-histidine + 2 NADH + 3 H(+). It participates in amino-acid biosynthesis; L-histidine biosynthesis; L-histidine from 5-phospho-alpha-D-ribose 1-diphosphate: step 9/9. In terms of biological role, catalyzes the sequential NAD-dependent oxidations of L-histidinol to L-histidinaldehyde and then to L-histidine. The chain is Histidinol dehydrogenase from Halalkalibacterium halodurans (strain ATCC BAA-125 / DSM 18197 / FERM 7344 / JCM 9153 / C-125) (Bacillus halodurans).